A 289-amino-acid chain; its full sequence is MTAQLIDGNALAKQLRTEAAQRAAALTARGHQPGLAVILVGDDPASQVYVRNKIKACEDNGFLSIFDRYPADLTEADLLGRIDALNRDPRIHGILVQLPLPKHIDSHKVLEAIAPEKDVDGFHVANAGALMTGAPLFRPCTPYGCMKMLESIDYPVRGARAVVVGASNIVGKPMAMLLLQAGATVTICNSKTRDLAAHTREADIVVAAVGRRNIITADMVKPGAVVIDVGMNRDDAGKLCGDVDFAGVRDVAGHITPVPGGVGPMTITMLLINTLEAAERAAEDAALAA.

Residues 165–167 (GAS) and Ser190 each bind NADP(+).

Belongs to the tetrahydrofolate dehydrogenase/cyclohydrolase family. Homodimer.

The enzyme catalyses (6R)-5,10-methylene-5,6,7,8-tetrahydrofolate + NADP(+) = (6R)-5,10-methenyltetrahydrofolate + NADPH. The catalysed reaction is (6R)-5,10-methenyltetrahydrofolate + H2O = (6R)-10-formyltetrahydrofolate + H(+). It functions in the pathway one-carbon metabolism; tetrahydrofolate interconversion. Catalyzes the oxidation of 5,10-methylenetetrahydrofolate to 5,10-methenyltetrahydrofolate and then the hydrolysis of 5,10-methenyltetrahydrofolate to 10-formyltetrahydrofolate. In Ralstonia nicotianae (strain ATCC BAA-1114 / GMI1000) (Ralstonia solanacearum), this protein is Bifunctional protein FolD.